We begin with the raw amino-acid sequence, 633 residues long: MPCVADWLNNPFSIVQGIFAQNTPNSDWEKKVTDYFKEKLKENNATNWVPSLNDVPVHYLKPNSLVKFRCMVQDMFDPEFYMGVYETVDPNTNARVLHFGKYRDVAECGPQQEIDMNSSQTVTLERQTFYCVPVPGESAWVKEYLFSLQARVSPSTSYTPSRHKRSYEEDEDMEQHPSKQKEQHMGSGGDSHGCGEPKRLETEASAGHHLISPNCSPPLDLNFPLPGEKGPACLVKVYESWDTFKVNDVLEVYGILSVDPVLSIVNSEERDSSMLDPMECMDTAEEQRVHSPPSSLVPRIHVILAHKLQHLNPLLPACLNEEESKTFVSNFMSELSPVRAELLGFLTHALLGDSLAAEYLILHLISTVYARRDVLPLGKFTVNLSGCPRNSIFTEHIYRIIQQLVPASYRLQMTIENMNHSRFIPRKDYTANRLVSGILQLASNTSLVIDETQLEQGQLDTKGVHNVKALGNLITWQKVDYDFSYHQMEFPCNINVLITSEGRSLLPSDCQVQLQPQIIPPNMEEYMNSLLTAVLPSVLNKFRIYLSLLRLLDYSISDEVTKAVEEDFVEMRKNDPESITADDLHRTLLVARFLSLSAGQTTLSRERWLRAKQLEALRKARLQQQKCVNGNEL.

The segment at 154 to 198 (PSTSYTPSRHKRSYEEDEDMEQHPSKQKEQHMGSGGDSHGCGEPK) is disordered. A compositionally biased stretch (basic and acidic residues) spans 174–184 (EQHPSKQKEQH).

This sequence belongs to the MCMBP family. In terms of assembly, interacts with the MCM complex: associates with the MCM3-7 complex which lacks MCM2, while it does not interact with the MCM complex when MCM2 is present (MCM2-7 complex).

The protein localises to the nucleus. Functionally, associated component of the MCM complex that acts as a regulator of DNA replication. Binds to the MCM complex during late S phase and promotes the disassembly of the MCM complex from chromatin, thereby acting as a key regulator of pre-replication complex (pre-RC) unloading from replicated DNA. Can dissociate the MCM complex without addition of ATP; probably acts by destabilizing interactions of each individual subunits of the MCM complex. Required for sister chromatid cohesion. The protein is Mini-chromosome maintenance complex-binding protein (MCMBP) of Gallus gallus (Chicken).